A 154-amino-acid polypeptide reads, in one-letter code: S-ribosylhomocysteine lyase (154 aa).

Fe cation contacts are provided by His58, His62, and Cys125.

The protein belongs to the LuxS family. In terms of assembly, homodimer. The cofactor is Fe cation.

The catalysed reaction is S-(5-deoxy-D-ribos-5-yl)-L-homocysteine = (S)-4,5-dihydroxypentane-2,3-dione + L-homocysteine. In terms of biological role, involved in the synthesis of autoinducer 2 (AI-2) which is secreted by bacteria and is used to communicate both the cell density and the metabolic potential of the environment. The regulation of gene expression in response to changes in cell density is called quorum sensing. Catalyzes the transformation of S-ribosylhomocysteine (RHC) to homocysteine (HC) and 4,5-dihydroxy-2,3-pentadione (DPD). In Dichelobacter nodosus (strain VCS1703A), this protein is S-ribosylhomocysteine lyase.